The chain runs to 388 residues: Acetate kinase (388 aa).

Asparagine 14 serves as a coordination point for Mg(2+). Lysine 21 contacts ATP. Arginine 80 is a substrate binding site. The active-site Proton donor/acceptor is the aspartate 137. Residues histidine 197–glycine 201, aspartate 271–arginine 273, and glycine 319–histidine 323 contribute to the ATP site. Glutamate 373 is a Mg(2+) binding site.

It belongs to the acetokinase family. In terms of assembly, homodimer. It depends on Mg(2+) as a cofactor. The cofactor is Mn(2+).

The protein localises to the cytoplasm. The enzyme catalyses acetate + ATP = acetyl phosphate + ADP. Its pathway is metabolic intermediate biosynthesis; acetyl-CoA biosynthesis; acetyl-CoA from acetate: step 1/2. Catalyzes the formation of acetyl phosphate from acetate and ATP. Can also catalyze the reverse reaction. This Mycobacterium marinum (strain ATCC BAA-535 / M) protein is Acetate kinase.